Here is a 217-residue protein sequence, read N- to C-terminus: GrpE protein homolog 1, mitochondrial (217 aa).

The N-terminal 27 residues, 1–27, are a transit peptide targeting the mitochondrion; sequence MAARCVRLARRSLPALALSFRPSPRLL. The disordered stretch occupies residues 37–56; that stretch reads GQNLDEDLGHCEPKTDPPSA. Lys-94 is subject to N6-acetyllysine; alternate. Lys-94 bears the N6-succinyllysine; alternate mark. An N6-acetyllysine modification is found at Lys-100. An N6-succinyllysine modification is found at Lys-120. Lys-215 is subject to N6-acetyllysine; alternate. An N6-succinyllysine; alternate modification is found at Lys-215.

The protein belongs to the GrpE family. As to quaternary structure, probable component of the PAM complex at least composed of a mitochondrial HSP70 protein, GRPEL1 or GRPEL2, TIMM44, TIMM16/PAM16 and TIMM14/DNAJC19. Binds to HSP70, HSC70 and HSJ1B.

It localises to the mitochondrion matrix. Functionally, essential component of the PAM complex, a complex required for the translocation of transit peptide-containing proteins from the inner membrane into the mitochondrial matrix in an ATP-dependent manner. Seems to control the nucleotide-dependent binding of mitochondrial HSP70 to substrate proteins. This Mus musculus (Mouse) protein is GrpE protein homolog 1, mitochondrial (Grpel1).